The sequence spans 201 residues: Keratin-associated protein 4-12 (201 aa).

A run of 30 repeats spans residues 5–9 (CCGSV), 20–24 (CCRPS), 25–29 (CCQTT), 30–34 (CCRTT), 35–39 (CCRPS), 40–44 (CCVSS), 45–49 (CCRPQ), 50–54 (CCQSV), 55–59 (CCQPT), 60–64 (CCRPS), 65–69 (CCQTT), 70–74 (CCRTT), 75–79 (CCRPS), 80–84 (CCVSS), 85–89 (CCRPQ), 90–94 (CCQSV), 95–99 (CCQPT), 100–104 (CCRPS), 105–109 (CCQTT), 110–114 (CCRTT), 115–119 (CCRPS), 120–124 (CCVSS), 125–129 (CCRPQ), 130–134 (CCQSV), 135–139 (CCQPT), 140–144 (CCRPS), 145–149 (CCISS), 155–159 (CCESS), 160–164 (CCRPC), and 165–169 (CCLRP). The 31 X 5 AA repeats of C-C-[GRQVIL]-[SPTR]-[VSTQPC] stretch occupies residues 5 to 169 (CCGSVCSDQG…CCRPCCCLRP (165 aa)).

It belongs to the KRTAP type 4 family. As to quaternary structure, interacts with hair keratins. As to expression, expressed in the hair follicles.

In the hair cortex, hair keratin intermediate filaments are embedded in an interfilamentous matrix, consisting of hair keratin-associated proteins (KRTAP), which are essential for the formation of a rigid and resistant hair shaft through their extensive disulfide bond cross-linking with abundant cysteine residues of hair keratins. The matrix proteins include the high-sulfur and high-glycine-tyrosine keratins. This Homo sapiens (Human) protein is Keratin-associated protein 4-12 (KRTAP4-12).